A 234-amino-acid polypeptide reads, in one-letter code: Triosephosphate isomerase (234 aa).

8–10 (NFK) is a substrate binding site. His-90 (electrophile) is an active-site residue. Glu-159 serves as the catalytic Proton acceptor. Substrate-binding positions include Gly-165, Ser-197, and 218–219 (GS).

In terms of assembly, homodimer.

It localises to the cytoplasm. It catalyses the reaction D-glyceraldehyde 3-phosphate = dihydroxyacetone phosphate. Its pathway is carbohydrate biosynthesis; gluconeogenesis. It functions in the pathway carbohydrate degradation; glycolysis; D-glyceraldehyde 3-phosphate from glycerone phosphate: step 1/1. Its function is as follows. Involved in the gluconeogenesis. Catalyzes stereospecifically the conversion of dihydroxyacetone phosphate (DHAP) to D-glyceraldehyde-3-phosphate (G3P). The polypeptide is Triosephosphate isomerase (Helicobacter pylori (strain ATCC 700392 / 26695) (Campylobacter pylori)).